Reading from the N-terminus, the 214-residue chain is Redox-sensing transcriptional repressor Rex (214 aa).

Positions 18–57 form a DNA-binding region, H-T-H motif; the sequence is LYYRLVNQLHEKGIDRVNSKTISEALDIDSASIRRDFSYF. 92–97 lines the NAD(+) pocket; the sequence is GVGNLG.

Belongs to the transcriptional regulatory Rex family. Homodimer.

The protein localises to the cytoplasm. Functionally, modulates transcription in response to changes in cellular NADH/NAD(+) redox state. This chain is Redox-sensing transcriptional repressor Rex, found in Staphylococcus carnosus (strain TM300).